The sequence spans 321 residues: Lipoyl synthase (321 aa).

Cysteine 68, cysteine 73, cysteine 79, cysteine 94, cysteine 98, cysteine 101, and serine 308 together coordinate [4Fe-4S] cluster. The region spanning 80–297 is the Radical SAM core domain; that stretch reads FNHGTATFMI…KALADELGFT (218 aa).

It belongs to the radical SAM superfamily. Lipoyl synthase family. [4Fe-4S] cluster is required as a cofactor.

The protein resides in the cytoplasm. It catalyses the reaction [[Fe-S] cluster scaffold protein carrying a second [4Fe-4S](2+) cluster] + N(6)-octanoyl-L-lysyl-[protein] + 2 oxidized [2Fe-2S]-[ferredoxin] + 2 S-adenosyl-L-methionine + 4 H(+) = [[Fe-S] cluster scaffold protein] + N(6)-[(R)-dihydrolipoyl]-L-lysyl-[protein] + 4 Fe(3+) + 2 hydrogen sulfide + 2 5'-deoxyadenosine + 2 L-methionine + 2 reduced [2Fe-2S]-[ferredoxin]. Its pathway is protein modification; protein lipoylation via endogenous pathway; protein N(6)-(lipoyl)lysine from octanoyl-[acyl-carrier-protein]: step 2/2. In terms of biological role, catalyzes the radical-mediated insertion of two sulfur atoms into the C-6 and C-8 positions of the octanoyl moiety bound to the lipoyl domains of lipoate-dependent enzymes, thereby converting the octanoylated domains into lipoylated derivatives. The sequence is that of Lipoyl synthase from Shewanella baltica (strain OS185).